Reading from the N-terminus, the 124-residue chain is MNDQLTAIYTELLLMKEELQSRLFEYSCFQVSTSPQAAINQKQKATLIYHIKEELQDVLLALSKIENGTFGYCEETGAPIPLAKLAVLPTARTANDFLYSVQFEKKTLPIWKSTDIEYGQALYE.

The dksA C4-type; degenerate zinc-finger motif lies at 73-94 (CEETGAPIPLAKLAVLPTARTA).

This is an uncharacterized protein from Bacillus subtilis (strain 168).